A 64-amino-acid polypeptide reads, in one-letter code: Bubble protein (64 aa).

Intrachain disulfides connect cysteine 3/cysteine 30, cysteine 18/cysteine 38, cysteine 28/cysteine 54, and cysteine 49/cysteine 64.

The protein resides in the secreted. Functionally, may act as a toxin. May recognize a molecule or part of a molecule with a negatively charged surface potential. The polypeptide is Bubble protein (Penicillium brevicompactum).